The primary structure comprises 56 residues: MRFHVLLTVALLLTSLMSIEAKPVNGAEMERDSAIESCFVSCTYCAYNCGTPSSVD.

The signal sequence occupies residues 1–21; it reads MRFHVLLTVALLLTSLMSIEA. Residues 22-30 constitute a propeptide that is removed on maturation; it reads KPVNGAEME.

In terms of processing, contains 2 disulfide bonds. In terms of tissue distribution, expressed by the venom duct.

It is found in the secreted. The protein is Turripeptide XIV-01 of Gemmula speciosa (Splendid gem-turris).